The primary structure comprises 462 residues: Fumarate hydratase class II (462 aa).

Substrate-binding positions include 97–99 (SGT), 127–130 (HPND), 137–139 (SSN), and T185. H186 (proton donor/acceptor) is an active-site residue. Residue S316 is part of the active site. Residues S317 and 322 to 324 (KVN) each bind substrate.

This sequence belongs to the class-II fumarase/aspartase family. Fumarase subfamily. As to quaternary structure, homotetramer.

The protein resides in the cytoplasm. It carries out the reaction (S)-malate = fumarate + H2O. The protein operates within carbohydrate metabolism; tricarboxylic acid cycle; (S)-malate from fumarate: step 1/1. Its function is as follows. Involved in the TCA cycle. Catalyzes the stereospecific interconversion of fumarate to L-malate. In Bacillus subtilis (strain 168), this protein is Fumarate hydratase class II.